We begin with the raw amino-acid sequence, 376 residues long: Protein-glutamate methylesterase/protein-glutamine glutaminase (376 aa).

The region spanning Lys4–Leu121 is the Response regulatory domain. A 4-aspartylphosphate modification is found at Asp55. Residues Ser142–Ser161 form a disordered region. Positions Ser145–Ser161 are enriched in low complexity. The 194-residue stretch at Thr183–Lys376 folds into the CheB-type methylesterase domain. Residues Ser195, His222, and Asp318 contribute to the active site.

This sequence belongs to the CheB family. In terms of processing, phosphorylated by CheA. Phosphorylation of the N-terminal regulatory domain activates the methylesterase activity.

It is found in the cytoplasm. The catalysed reaction is [protein]-L-glutamate 5-O-methyl ester + H2O = L-glutamyl-[protein] + methanol + H(+). The enzyme catalyses L-glutaminyl-[protein] + H2O = L-glutamyl-[protein] + NH4(+). In terms of biological role, involved in chemotaxis. Part of a chemotaxis signal transduction system that modulates chemotaxis in response to various stimuli. Catalyzes the demethylation of specific methylglutamate residues introduced into the chemoreceptors (methyl-accepting chemotaxis proteins or MCP) by CheR. Also mediates the irreversible deamidation of specific glutamine residues to glutamic acid. This Aliivibrio fischeri (strain ATCC 700601 / ES114) (Vibrio fischeri) protein is Protein-glutamate methylesterase/protein-glutamine glutaminase.